A 376-amino-acid chain; its full sequence is Chaperone protein DnaJ (376 aa).

The region spanning 5–72 is the J domain; that stretch reads DFYEVLGVPK…QKRAAYDQYG (68 aa). The CR-type zinc finger occupies 136 to 214; the sequence is GKEAQIRIPS…CHGQGRVKKQ (79 aa). Zn(2+)-binding residues include Cys-149, Cys-152, Cys-166, Cys-169, Cys-188, Cys-191, Cys-202, and Cys-205. CXXCXGXG motif repeat units lie at residues 149–156, 166–173, 188–195, and 202–209; these read CETCHGSG, CGTCQGSG, CPHCRGTG, and CTACHGQG. 2 disordered regions span residues 227-246 and 354-376; these read DGMRIRSTGNGEPGTNGGPP and KKGGAKHSPSTESWTDRLKSFFS. A compositionally biased stretch (gly residues) spans 237–246; sequence GEPGTNGGPP. The span at 367–376 shows a compositional bias: basic and acidic residues; sequence WTDRLKSFFS.

The protein belongs to the DnaJ family. Homodimer. Zn(2+) serves as cofactor.

It is found in the cytoplasm. In terms of biological role, participates actively in the response to hyperosmotic and heat shock by preventing the aggregation of stress-denatured proteins and by disaggregating proteins, also in an autonomous, DnaK-independent fashion. Unfolded proteins bind initially to DnaJ; upon interaction with the DnaJ-bound protein, DnaK hydrolyzes its bound ATP, resulting in the formation of a stable complex. GrpE releases ADP from DnaK; ATP binding to DnaK triggers the release of the substrate protein, thus completing the reaction cycle. Several rounds of ATP-dependent interactions between DnaJ, DnaK and GrpE are required for fully efficient folding. Also involved, together with DnaK and GrpE, in the DNA replication of plasmids through activation of initiation proteins. This is Chaperone protein DnaJ from Acidovorax ebreus (strain TPSY) (Diaphorobacter sp. (strain TPSY)).